The primary structure comprises 212 residues: Pyrrolidone-carboxylate peptidase (212 aa).

Active-site residues include Glu-78, Cys-141, and His-165.

Belongs to the peptidase C15 family. In terms of assembly, homotetramer.

The protein localises to the cytoplasm. The enzyme catalyses Release of an N-terminal pyroglutamyl group from a polypeptide, the second amino acid generally not being Pro.. Functionally, removes 5-oxoproline from various penultimate amino acid residues except L-proline. The protein is Pyrrolidone-carboxylate peptidase of Staphylococcus aureus (strain bovine RF122 / ET3-1).